A 106-amino-acid chain; its full sequence is MSLASRRKVRIRLYGTNPTDVDQVAREIVDLAKKMGVQVRGPIPLPTRRLMVTVRRAPSGQGYHTFDHWEMRISKRLIDIEASERVLRRLMTIRVPDTVKIELQLI.

This sequence belongs to the universal ribosomal protein uS10 family. Part of the 30S ribosomal subunit.

Its function is as follows. Involved in the binding of tRNA to the ribosomes. This chain is Small ribosomal subunit protein uS10, found in Pyrobaculum neutrophilum (strain DSM 2338 / JCM 9278 / NBRC 100436 / V24Sta) (Thermoproteus neutrophilus).